The sequence spans 260 residues: Adenosylcobinamide-GDP ribazoletransferase (260 aa).

Helical transmembrane passes span 40-60 (AFPF…LLLL), 64-84 (ADPL…TGAL), 117-137 (YGAI…AVIA), 142-162 (PLTA…AIAW), 188-208 (QFAL…AFGL), and 209-229 (RPLV…TAFI).

Belongs to the CobS family. The cofactor is Mg(2+).

The protein resides in the cell inner membrane. It carries out the reaction alpha-ribazole + adenosylcob(III)inamide-GDP = adenosylcob(III)alamin + GMP + H(+). It catalyses the reaction alpha-ribazole 5'-phosphate + adenosylcob(III)inamide-GDP = adenosylcob(III)alamin 5'-phosphate + GMP + H(+). Its pathway is cofactor biosynthesis; adenosylcobalamin biosynthesis; adenosylcobalamin from cob(II)yrinate a,c-diamide: step 7/7. Joins adenosylcobinamide-GDP and alpha-ribazole to generate adenosylcobalamin (Ado-cobalamin). Also synthesizes adenosylcobalamin 5'-phosphate from adenosylcobinamide-GDP and alpha-ribazole 5'-phosphate. In Rhizobium johnstonii (strain DSM 114642 / LMG 32736 / 3841) (Rhizobium leguminosarum bv. viciae), this protein is Adenosylcobinamide-GDP ribazoletransferase.